A 214-amino-acid polypeptide reads, in one-letter code: MSRLIIVFIVVTMICSATALPSKKIIDEDEEDEKRSADVAGAVIDGASLSFDILKTVLEALGNVKRKIAVGVDNESGKTWTALNTYFRSGTSDIVLPHKVPHGKALLYNGQKDRGPVATGAVGVLAYLMSDGNTLAVLFSVPYDYNWYSNWWNVRIYKGKRRADQRMYEELYYNLSPFRGDNGWHTRNLGYGLKSRGFMNSSGHAILEIHVSKA.

The N-terminal stretch at 1 to 19 is a signal peptide; sequence MSRLIIVFIVVTMICSATA. Positions 20-35 are excised as a propeptide; that stretch reads LPSKKIIDEDEEDEKR. The tract at residues 38–47 is plays an important role in the hemolytic activity; sequence DVAGAVIDGA. Residues 46 to 65 form an N-terminal region region; that stretch reads GASLSFDILKTVLEALGNVK. Phosphocholine is bound by residues Ser-89, Val-122, Ser-140, Pro-142, Tyr-168, Tyr-172, and Tyr-173. Positions 140-155 are trp-rich region, which is important for the binding to lipid membrane; that stretch reads SVPYDYNWYSNWWNVR. The Cell attachment site, crucial for protein stability motif lies at 179 to 181; sequence RGD.

It belongs to the actinoporin family. Sea anemone subfamily. In terms of assembly, octamer or nonamer in membranes. Monomer in the soluble state.

Its subcellular location is the secreted. It is found in the nematocyst. It localises to the target cell membrane. Pore-forming protein that forms cations-selective hydrophilic pores of around 1 nm and causes cardiac stimulation and cytolysis. Pore formation is a multi-step process that involves specific recognition of membrane sphingomyelin (but neither cholesterol nor phosphatidylcholine) using aromatic rich region and adjacent phosphocholine (POC) binding site, firm binding to the membrane (mainly driven by hydrophobic interactions) accompanied by the transfer of the N-terminal region to the lipid-water interface and finally pore formation after oligomerization of monomers. Cytolytic effects include red blood cells hemolysis, platelet aggregation and lysis, cytotoxic and cytostatic effects on fibroblasts. Lethality in mammals has been ascribed to severe vasospasm of coronary vessels, cardiac arrhythmia, and inotropic effects. In Actinia equina (Beadlet anemone), this protein is DELTA-actitoxin-Aeq1a.